The chain runs to 83 residues: MRLFLSLPVLVVVLSMVLEGPAPAQGAPDVSSALDKLKEFGNTLEDKAREVINRIKQSEFPAKTRDWFSETFRKVKEKLKINS.

Positions 1 to 26 (MRLFLSLPVLVVVLSMVLEGPAPAQG) are cleaved as a signal peptide.

This sequence belongs to the apolipoprotein C1 family.

Its subcellular location is the secreted. Inhibitor of lipoprotein binding to the low density lipoprotein (LDL) receptor, LDL receptor-related protein, and very low density lipoprotein (VLDL) receptor. Associates with high density lipoproteins (HDL) and the triacylglycerol-rich lipoproteins in the plasma and makes up about 10% of the protein of the VLDL and 2% of that of HDL. Appears to interfere directly with fatty acid uptake and is also the major plasma inhibitor of cholesteryl ester transfer protein (CETP). Binds free fatty acids and reduces their intracellular esterification. Modulates the interaction of APOE with beta-migrating VLDL and inhibits binding of beta-VLDL to the LDL receptor-related protein. The chain is Apolipoprotein C-I, basic form (APOC1B) from Colobus guereza (Mantled guereza).